The chain runs to 339 residues: Phytoene synthase (339 aa).

Belongs to the phytoene/squalene synthase family. ATP is required as a cofactor. Requires Mn(2+) as cofactor. Mg(2+) serves as cofactor.

Its pathway is carotenoid biosynthesis; phytoene biosynthesis. In terms of biological role, involved in the biosynthesis of carotenoids. Catalyzes the condensation of two molecules of geranylgeranyl diphosphate (GGPP) to give prephytoene diphosphate (PPPP) and the subsequent rearrangement of the cyclopropylcarbinyl intermediate to yield phytoene. The sequence is that of Phytoene synthase (crtB) from Rhodobacter capsulatus (strain ATCC BAA-309 / NBRC 16581 / SB1003).